The chain runs to 229 residues: Deoxyribose-phosphate aldolase (229 aa).

Asp-96 (proton donor/acceptor) is an active-site residue. Catalysis depends on Lys-166, which acts as the Schiff-base intermediate with acetaldehyde. Lys-195 (proton donor/acceptor) is an active-site residue.

Belongs to the DeoC/FbaB aldolase family. DeoC type 1 subfamily.

The protein localises to the cytoplasm. It carries out the reaction 2-deoxy-D-ribose 5-phosphate = D-glyceraldehyde 3-phosphate + acetaldehyde. Its pathway is carbohydrate degradation; 2-deoxy-D-ribose 1-phosphate degradation; D-glyceraldehyde 3-phosphate and acetaldehyde from 2-deoxy-alpha-D-ribose 1-phosphate: step 2/2. In terms of biological role, catalyzes a reversible aldol reaction between acetaldehyde and D-glyceraldehyde 3-phosphate to generate 2-deoxy-D-ribose 5-phosphate. This Micrococcus luteus (strain ATCC 4698 / DSM 20030 / JCM 1464 / CCM 169 / CCUG 5858 / IAM 1056 / NBRC 3333 / NCIMB 9278 / NCTC 2665 / VKM Ac-2230) (Micrococcus lysodeikticus) protein is Deoxyribose-phosphate aldolase.